Consider the following 536-residue polypeptide: MEIRQHEWLSASPHEGFEQMRLKSRPKEPSPSLTRVGANFYSSVKQQDYSASVWLRRKDKLEHSQQKCIVIFALVCCFAILVALIFSAVDIMGEDEDGLSEKNCQNKCRIALVENIPEGLNYSENAPFHLSLFQGWMNLLNMAKKSVDIVSSHWDLNHTHPSACQGQRLFEKLLQLTSQNIEIKLVSDVTADSKVLEALKLKGAEVTYMNMTAYNKGRLQSSFWIVDKQHVYIGSAGLDWQSLGQMKELGVIFYNCSCLVLDLQRIFALYSSLKFKSRVPQTWSKRLYGVYDNEKKLQLQLNETKSQAFVSNSPKLFCPKNRSFDIDAIYSVIDDAKQYVYIAVMDYLPISSTSTKRTYWPDLDAKIREALVLRSVRVRLLLSFWKETDPLTFNFISSLKAICTEIANCSLKVKFFDLERENACATKEQKNHTFPRLNRNKYMVTDGAAYIGNFDWVGNDFTQNAGTGLVINQADVRNNRSIIKQLKDVFERDWYSPYAKTLQPTKQPNCSSLFKLKPLSNKTATDDTGGKDPRNV.

Residues 69–89 traverse the membrane as a helical segment; it reads IVIFALVCCFAILVALIFSAV. N-linked (GlcNAc...) asparagine glycosylation is present at N121. The 28-residue stretch at 215 to 242 folds into the PLD phosphodiesterase 1 domain; it reads NKGRLQSSFWIVDKQHVYIGSAGLDWQS. N302 carries an N-linked (GlcNAc...) asparagine glycan. The PLD phosphodiesterase 2 domain occupies 434–460; that stretch reads FPRLNRNKYMVTDGAAYIGNFDWVGND.

This sequence belongs to the phospholipase D family.

Its subcellular location is the membrane. The sequence is that of Inactive phospholipase D5 (PLD5) from Homo sapiens (Human).